The chain runs to 216 residues: Peptide methionine sulfoxide reductase MsrA (216 aa).

Residue Cys-57 is part of the active site.

The protein belongs to the MsrA Met sulfoxide reductase family.

The catalysed reaction is L-methionyl-[protein] + [thioredoxin]-disulfide + H2O = L-methionyl-(S)-S-oxide-[protein] + [thioredoxin]-dithiol. It catalyses the reaction [thioredoxin]-disulfide + L-methionine + H2O = L-methionine (S)-S-oxide + [thioredoxin]-dithiol. In terms of biological role, has an important function as a repair enzyme for proteins that have been inactivated by oxidation. Catalyzes the reversible oxidation-reduction of methionine sulfoxide in proteins to methionine. This chain is Peptide methionine sulfoxide reductase MsrA, found in Agrobacterium fabrum (strain C58 / ATCC 33970) (Agrobacterium tumefaciens (strain C58)).